The sequence spans 388 residues: Probable peptidoglycan glycosyltransferase FtsW (388 aa).

11 helical membrane passes run 16-36 (LVLIVLALITIGLVMVLSSSV), 54-74 (VFALGVGGLFAALVLMVPSQS), 82-102 (WFLLGLVLLALVLIFGREIGG), 109-129 (LVVMNFQPAEWMKIATILFLA), 144-164 (TAVIRLFLPFGIMAGLLLLQP), 167-187 (GTTVLIAGVLVGMLFIAGAPF), 189-209 (YFVITVLPIGAILAVLLINSP), 233-253 (SQALMAIGSGGITGSGLGASV), 277-297 (WLGVVILLSLYGLLLWRMFAV), 310-330 (ALVVYGVAIMFAGQLLINVGV), and 342-362 (LPFVSYGGSSLMMALLAIGLV).

It belongs to the SEDS family. FtsW subfamily.

The protein resides in the cell inner membrane. It catalyses the reaction [GlcNAc-(1-&gt;4)-Mur2Ac(oyl-L-Ala-gamma-D-Glu-L-Lys-D-Ala-D-Ala)](n)-di-trans,octa-cis-undecaprenyl diphosphate + beta-D-GlcNAc-(1-&gt;4)-Mur2Ac(oyl-L-Ala-gamma-D-Glu-L-Lys-D-Ala-D-Ala)-di-trans,octa-cis-undecaprenyl diphosphate = [GlcNAc-(1-&gt;4)-Mur2Ac(oyl-L-Ala-gamma-D-Glu-L-Lys-D-Ala-D-Ala)](n+1)-di-trans,octa-cis-undecaprenyl diphosphate + di-trans,octa-cis-undecaprenyl diphosphate + H(+). The protein operates within cell wall biogenesis; peptidoglycan biosynthesis. Peptidoglycan polymerase that is essential for cell division. This chain is Probable peptidoglycan glycosyltransferase FtsW, found in Thiomicrospira cyclica (strain DSM 14477 / JCM 11371 / ALM1) (Thioalkalimicrobium cyclicum).